The primary structure comprises 468 residues: Ribulose bisphosphate carboxylase large chain (468 aa).

At lysine 5 the chain carries N6,N6,N6-trimethyllysine. Substrate-binding residues include asparagine 114 and threonine 164. Lysine 166 functions as the Proton acceptor in the catalytic mechanism. Residue lysine 168 coordinates substrate. Residues lysine 192, aspartate 194, and glutamate 195 each contribute to the Mg(2+) site. At lysine 192 the chain carries N6-carboxylysine. Histidine 285 functions as the Proton acceptor in the catalytic mechanism. Arginine 286, histidine 318, and serine 370 together coordinate substrate.

Belongs to the RuBisCO large chain family. Type I subfamily. In terms of assembly, heterohexadecamer of 8 large chains and 8 small chains; disulfide-linked. The disulfide link is formed within the large subunit homodimers. Mg(2+) serves as cofactor. In terms of processing, the disulfide bond which can form in the large chain dimeric partners within the hexadecamer appears to be associated with oxidative stress and protein turnover.

The protein localises to the plastid. It is found in the chloroplast. It carries out the reaction 2 (2R)-3-phosphoglycerate + 2 H(+) = D-ribulose 1,5-bisphosphate + CO2 + H2O. It catalyses the reaction D-ribulose 1,5-bisphosphate + O2 = 2-phosphoglycolate + (2R)-3-phosphoglycerate + 2 H(+). RuBisCO catalyzes two reactions: the carboxylation of D-ribulose 1,5-bisphosphate, the primary event in carbon dioxide fixation, as well as the oxidative fragmentation of the pentose substrate in the photorespiration process. Both reactions occur simultaneously and in competition at the same active site. The chain is Ribulose bisphosphate carboxylase large chain from Tecoma stans (Yellow bells).